A 111-amino-acid polypeptide reads, in one-letter code: Small ribosomal subunit protein bS16 (111 aa).

This sequence belongs to the bacterial ribosomal protein bS16 family.

This is Small ribosomal subunit protein bS16 from Rickettsia canadensis (strain McKiel).